A 353-amino-acid chain; its full sequence is UPF0283 membrane protein YcjF (353 aa).

Positions 1–19 (MSEPLKPRIDFAEPLKEEP) are enriched in basic and acidic residues. The segment at 1–35 (MSEPLKPRIDFAEPLKEEPTSAFKAQQTFSEAESR) is disordered. A run of 3 helical transmembrane segments spans residues 70–90 (MVMG…VQWT), 100–120 (VALG…GSVV), and 213–233 (ESTL…FIAW).

The protein belongs to the UPF0283 family.

Its subcellular location is the cell inner membrane. The chain is UPF0283 membrane protein YcjF from Salmonella newport (strain SL254).